The sequence spans 144 residues: Ribosome-binding factor A (144 aa).

Residues 121 to 144 (KAQTGVEEPLENTAEGEENPSGGE) form a disordered region. Acidic residues predominate over residues 128 to 138 (EPLENTAEGEE).

Belongs to the RbfA family. Monomer. Binds 30S ribosomal subunits, but not 50S ribosomal subunits or 70S ribosomes.

Its subcellular location is the cytoplasm. Its function is as follows. One of several proteins that assist in the late maturation steps of the functional core of the 30S ribosomal subunit. Associates with free 30S ribosomal subunits (but not with 30S subunits that are part of 70S ribosomes or polysomes). Required for efficient processing of 16S rRNA. May interact with the 5'-terminal helix region of 16S rRNA. The sequence is that of Ribosome-binding factor A from Synechococcus sp. (strain JA-2-3B'a(2-13)) (Cyanobacteria bacterium Yellowstone B-Prime).